Reading from the N-terminus, the 522-residue chain is Lysine--tRNA ligase (522 aa).

The 'HIGH' region motif lies at 44 to 52 (PSGLPHIGT). The short motif at 290–294 (KISKS) is the 'KMSKS' region element. Lysine 293 contributes to the ATP binding site.

The protein belongs to the class-I aminoacyl-tRNA synthetase family.

The protein resides in the cytoplasm. The enzyme catalyses tRNA(Lys) + L-lysine + ATP = L-lysyl-tRNA(Lys) + AMP + diphosphate. The sequence is that of Lysine--tRNA ligase from Rickettsia peacockii (strain Rustic).